A 283-amino-acid polypeptide reads, in one-letter code: Putative sugar uptake protein BC_0219 (283 aa).

Transmembrane regions (helical) follow at residues 4–21, 26–48, 52–71, 84–106, 110–132, 151–173, 178–195, 208–230, 234–253, and 260–279; these read LLAL…LVSV, GAYS…MYVF, ALTM…WALG, VSTT…GVIA, WTTT…GVVF, LLTL…WYNI, AILP…VLTS, ALSG…RVGV, FPLS…VFLG, and QLIF…VLLG.

Belongs to the GRP transporter (TC 2.A.7.5) family.

It is found in the cell membrane. In Bacillus cereus (strain ATCC 14579 / DSM 31 / CCUG 7414 / JCM 2152 / NBRC 15305 / NCIMB 9373 / NCTC 2599 / NRRL B-3711), this protein is Putative sugar uptake protein BC_0219.